A 161-amino-acid chain; its full sequence is Cytochrome c-type biogenesis protein CcmE (161 aa).

Residues 1–8 (MNPRRKKR) lie on the Cytoplasmic side of the membrane. A helical; Signal-anchor for type II membrane protein transmembrane segment spans residues 9–29 (LTLAVALIAGVAAVASLLLYA). Residues 30–161 (LNSNLNLFYT…TYNQKALEDK (132 aa)) are Periplasmic-facing. Heme-binding residues include histidine 131 and tyrosine 135. Positions 142–161 (EAMGQTHEKPTYNQKALEDK) are disordered. Residues 147 to 161 (THEKPTYNQKALEDK) show a composition bias toward basic and acidic residues.

The protein belongs to the CcmE/CycJ family.

It is found in the cell inner membrane. In terms of biological role, heme chaperone required for the biogenesis of c-type cytochromes. Transiently binds heme delivered by CcmC and transfers the heme to apo-cytochromes in a process facilitated by CcmF and CcmH. This is Cytochrome c-type biogenesis protein CcmE from Shewanella frigidimarina (strain NCIMB 400).